The primary structure comprises 903 residues: Dual 3',5'-cyclic-AMP and -GMP phosphodiesterase 11A (903 aa).

2 GAF domains span residues 175–324 (DLTS…GIAI) and 356–512 (DLEK…GLGI). Residue S378 participates in 3',5'-cyclic GMP binding. Residues 542–866 (SKTEVDKFKA…VKWEELDKKR (325 aa)) enclose the PDEase domain. H618 serves as the catalytic Proton donor. Positions 622, 658, 659, and 770 each coordinate a divalent metal cation. Residues 863-903 (DKKRQHDHGASVPASPCSAAEGSETGGVPCCSNNTPPTHVS) are disordered. A compositionally biased stretch (polar residues) spans 893 to 903 (CSNNTPPTHVS).

The protein belongs to the cyclic nucleotide phosphodiesterase family. A divalent metal cation serves as cofactor.

It localises to the cytoplasm. It is found in the cytosol. It catalyses the reaction 3',5'-cyclic GMP + H2O = GMP + H(+). The enzyme catalyses 3',5'-cyclic AMP + H2O = AMP + H(+). Plays a role in signal transduction by regulating the intracellular concentration of cyclic nucleotides cAMP and cGMP. Catalyzes the hydrolysis of both cAMP and cGMP to 5'-AMP and 5'-GMP, respectively. In Takifugu rubripes (Japanese pufferfish), this protein is Dual 3',5'-cyclic-AMP and -GMP phosphodiesterase 11A (pde11a).